Consider the following 761-residue polypeptide: Dipeptidyl-peptidase 4 (761 aa).

The N-terminal stretch at 1-15 (MTLSAWIILVTLAMA) is a signal peptide. Active-site charge relay system residues include serine 622, aspartate 706, and histidine 738.

Belongs to the peptidase S9C family.

The protein localises to the membrane. Its function is as follows. May be involved in metabolism of dipeptides or may affect host defense mechanisms. This chain is Dipeptidyl-peptidase 4 (DPP), found in Giardia intestinalis (Giardia lamblia).